Consider the following 383-residue polypeptide: S-adenosylmethionine synthase (383 aa).

ATP is bound at residue His-15. Asp-17 is a binding site for Mg(2+). Glu-43 serves as a coordination point for K(+). Glu-56 and Gln-99 together coordinate L-methionine. Positions 99–109 (QSPDINQGVDR) are flexible loop. ATP-binding positions include 164 to 166 (DAK), 230 to 231 (RF), Asp-239, 245 to 246 (RK), Ala-262, and Lys-266. Asp-239 is an L-methionine binding site. Position 270 (Lys-270) interacts with L-methionine.

It belongs to the AdoMet synthase family. In terms of assembly, homotetramer; dimer of dimers. It depends on Mg(2+) as a cofactor. K(+) serves as cofactor.

The protein localises to the cytoplasm. It carries out the reaction L-methionine + ATP + H2O = S-adenosyl-L-methionine + phosphate + diphosphate. It participates in amino-acid biosynthesis; S-adenosyl-L-methionine biosynthesis; S-adenosyl-L-methionine from L-methionine: step 1/1. Functionally, catalyzes the formation of S-adenosylmethionine (AdoMet) from methionine and ATP. The overall synthetic reaction is composed of two sequential steps, AdoMet formation and the subsequent tripolyphosphate hydrolysis which occurs prior to release of AdoMet from the enzyme. In Pectobacterium atrosepticum (strain SCRI 1043 / ATCC BAA-672) (Erwinia carotovora subsp. atroseptica), this protein is S-adenosylmethionine synthase.